The chain runs to 261 residues: 3-methyl-2-oxobutanoate hydroxymethyltransferase (261 aa).

The Mg(2+) site is built by Asp-42 and Asp-81. Residues 42-43 (DS), Asp-81, and Lys-110 each bind 3-methyl-2-oxobutanoate. Glu-112 is a binding site for Mg(2+). The active-site Proton acceptor is the Glu-179.

It belongs to the PanB family. Homodecamer; pentamer of dimers. Mg(2+) is required as a cofactor.

The protein resides in the cytoplasm. The enzyme catalyses 3-methyl-2-oxobutanoate + (6R)-5,10-methylene-5,6,7,8-tetrahydrofolate + H2O = 2-dehydropantoate + (6S)-5,6,7,8-tetrahydrofolate. The protein operates within cofactor biosynthesis; coenzyme A biosynthesis. Its function is as follows. Catalyzes the reversible reaction in which hydroxymethyl group from 5,10-methylenetetrahydrofolate is transferred onto alpha-ketoisovalerate to form ketopantoate. This is 3-methyl-2-oxobutanoate hydroxymethyltransferase from Pyrobaculum neutrophilum (strain DSM 2338 / JCM 9278 / NBRC 100436 / V24Sta) (Thermoproteus neutrophilus).